The chain runs to 210 residues: Large ribosomal subunit protein bL25 (210 aa).

Belongs to the bacterial ribosomal protein bL25 family. CTC subfamily. As to quaternary structure, part of the 50S ribosomal subunit; part of the 5S rRNA/L5/L18/L25 subcomplex. Contacts the 5S rRNA. Binds to the 5S rRNA independently of L5 and L18.

Functionally, this is one of the proteins that binds to the 5S RNA in the ribosome where it forms part of the central protuberance. The protein is Large ribosomal subunit protein bL25 of Herminiimonas arsenicoxydans.